The primary structure comprises 336 residues: 4-hydroxy-3-methylbut-2-enyl diphosphate reductase (336 aa).

Cysteine 37 contacts [4Fe-4S] cluster. (2E)-4-hydroxy-3-methylbut-2-enyl diphosphate-binding residues include histidine 66 and histidine 99. Residues histidine 66 and histidine 99 each coordinate dimethylallyl diphosphate. Positions 66 and 99 each coordinate isopentenyl diphosphate. Residue cysteine 121 coordinates [4Fe-4S] cluster. Position 149 (histidine 149) interacts with (2E)-4-hydroxy-3-methylbut-2-enyl diphosphate. Histidine 149 serves as a coordination point for dimethylallyl diphosphate. Residue histidine 149 participates in isopentenyl diphosphate binding. Glutamate 151 (proton donor) is an active-site residue. Threonine 189 provides a ligand contact to (2E)-4-hydroxy-3-methylbut-2-enyl diphosphate. [4Fe-4S] cluster is bound at residue cysteine 219. The (2E)-4-hydroxy-3-methylbut-2-enyl diphosphate site is built by serine 247, serine 248, asparagine 249, and serine 292. Residues serine 247, serine 248, asparagine 249, and serine 292 each coordinate dimethylallyl diphosphate. Isopentenyl diphosphate is bound by residues serine 247, serine 248, asparagine 249, and serine 292.

Belongs to the IspH family. Requires [4Fe-4S] cluster as cofactor.

The catalysed reaction is isopentenyl diphosphate + 2 oxidized [2Fe-2S]-[ferredoxin] + H2O = (2E)-4-hydroxy-3-methylbut-2-enyl diphosphate + 2 reduced [2Fe-2S]-[ferredoxin] + 2 H(+). The enzyme catalyses dimethylallyl diphosphate + 2 oxidized [2Fe-2S]-[ferredoxin] + H2O = (2E)-4-hydroxy-3-methylbut-2-enyl diphosphate + 2 reduced [2Fe-2S]-[ferredoxin] + 2 H(+). Its pathway is isoprenoid biosynthesis; dimethylallyl diphosphate biosynthesis; dimethylallyl diphosphate from (2E)-4-hydroxy-3-methylbutenyl diphosphate: step 1/1. It participates in isoprenoid biosynthesis; isopentenyl diphosphate biosynthesis via DXP pathway; isopentenyl diphosphate from 1-deoxy-D-xylulose 5-phosphate: step 6/6. In terms of biological role, catalyzes the conversion of 1-hydroxy-2-methyl-2-(E)-butenyl 4-diphosphate (HMBPP) into a mixture of isopentenyl diphosphate (IPP) and dimethylallyl diphosphate (DMAPP). Acts in the terminal step of the DOXP/MEP pathway for isoprenoid precursor biosynthesis. In Rhodococcus jostii (strain RHA1), this protein is 4-hydroxy-3-methylbut-2-enyl diphosphate reductase.